Reading from the N-terminus, the 746-residue chain is Disintegrin and metalloproteinase domain-containing protein 18 (746 aa).

Residues methionine 1–alanine 16 form the signal peptide. Positions histidine 17–proline 183 are excised as a propeptide. 6 N-linked (GlcNAc...) asparagine glycosylation sites follow: asparagine 36, asparagine 122, asparagine 149, asparagine 156, asparagine 177, and asparagine 294. The Extracellular segment spans residues asparagine 177 to asparagine 687. Residues glutamine 184–serine 381 form the Peptidase M12B domain. Disulfide bonds link cysteine 293–cysteine 376, cysteine 335–cysteine 360, cysteine 337–cysteine 342, and cysteine 450–cysteine 471. 4 N-linked (GlcNAc...) asparagine glycosylation sites follow: asparagine 359, asparagine 465, asparagine 611, and asparagine 625. Positions glutamine 390–asparagine 479 constitute a Disintegrin domain. Residues threonine 620–lysine 654 enclose the EGF-like domain. Cystine bridges form between cysteine 624–cysteine 636, cysteine 630–cysteine 642, and cysteine 644–cysteine 653. A helical transmembrane segment spans residues tryptophan 688–phenylalanine 708. Residues lysine 709 to lysine 746 are Cytoplasmic-facing.

Post-translationally, the prodomain and the metalloprotease-like domain are cleaved during the epididymal maturation of the spermatozoa. Expressed predominantly in adult and prepubertal testis.

Its subcellular location is the membrane. Functionally, sperm surface membrane protein that may be involved in spermatogenesis and fertilization. This is a non catalytic metalloprotease-like protein. In Macaca fascicularis (Crab-eating macaque), this protein is Disintegrin and metalloproteinase domain-containing protein 18 (ADAM18).